Here is a 124-residue protein sequence, read N- to C-terminus: Small ribosomal subunit protein uS12 (124 aa).

Residues 1–25 (MATINQLVRKPRQASTYKSASPALD) form a disordered region.

It belongs to the universal ribosomal protein uS12 family. As to quaternary structure, part of the 30S ribosomal subunit. Contacts proteins S8 and S17. May interact with IF1 in the 30S initiation complex.

Its function is as follows. With S4 and S5 plays an important role in translational accuracy. Functionally, interacts with and stabilizes bases of the 16S rRNA that are involved in tRNA selection in the A site and with the mRNA backbone. Located at the interface of the 30S and 50S subunits, it traverses the body of the 30S subunit contacting proteins on the other side and probably holding the rRNA structure together. The combined cluster of proteins S8, S12 and S17 appears to hold together the shoulder and platform of the 30S subunit. This Xylella fastidiosa (strain 9a5c) protein is Small ribosomal subunit protein uS12.